Consider the following 299-residue polypeptide: NAD-dependent protein deacetylase 1 (299 aa).

Residues 15-292 (LPPGTTDLAP…TTVADRLGLR (278 aa)) form the Deacetylase sirtuin-type domain. NAD(+)-binding positions include 39 to 59 (GAGI…GSLS) and 117 to 120 (QNVD). The Proton acceptor role is filled by histidine 135. Residues cysteine 143, cysteine 146, cysteine 194, and cysteine 197 each coordinate Zn(2+). NAD(+) contacts are provided by residues 234-236 (GSS) and leucine 278.

This sequence belongs to the sirtuin family. Class II subfamily. Requires Zn(2+) as cofactor.

It localises to the cytoplasm. The enzyme catalyses N(6)-acetyl-L-lysyl-[protein] + NAD(+) + H2O = 2''-O-acetyl-ADP-D-ribose + nicotinamide + L-lysyl-[protein]. NAD-dependent protein deacetylase which modulates the activities of several enzymes which are inactive in their acetylated form. The chain is NAD-dependent protein deacetylase 1 from Streptomyces coelicolor (strain ATCC BAA-471 / A3(2) / M145).